The following is a 1034-amino-acid chain: Presequence protease, mitochondrial (1034 aa).

The N-terminal 26 residues, 1 to 26, are a transit peptide targeting the mitochondrion; that stretch reads MLKTRLKQSRAISRVVRRYACSHPIS. His97 contacts Zn(2+). Glu100 acts as the Proton acceptor in catalysis. A Zn(2+)-binding site is contributed by His101. Glu173 is a catalytic residue. Glu198 is a Zn(2+) binding site.

Belongs to the peptidase M16 family. PreP subfamily. As to quaternary structure, monomer and homodimer; homodimerization is induced by binding of the substrate. Zn(2+) is required as a cofactor.

The protein resides in the mitochondrion intermembrane space. It localises to the mitochondrion matrix. In terms of biological role, degrades mitochondrial transit peptides after their cleavage in the intermembrane space or in the matrix, and presequence peptides; clearance of these peptides is required to keep the presequence processing machinery running. Preferentially cleaves the N-terminal side of paired basic amino acid residues. Also degrades other unstructured peptides. May function as an ATP-dependent peptidase as opposed to a metalloendopeptidase. In Candida albicans (strain SC5314 / ATCC MYA-2876) (Yeast), this protein is Presequence protease, mitochondrial (CYM1).